The sequence spans 156 residues: Superoxide dismutase [Cu-Zn] 2 (156 aa).

His-47, His-49, and His-64 together coordinate Cu cation. The cysteines at positions 58 and 147 are disulfide-linked. The Zn(2+) site is built by His-64, His-72, His-81, and Asp-84. Residue His-121 participates in Cu cation binding.

This sequence belongs to the Cu-Zn superoxide dismutase family. As to quaternary structure, homodimer. The cofactor is Cu cation. Zn(2+) serves as cofactor.

It localises to the cytoplasm. The enzyme catalyses 2 superoxide + 2 H(+) = H2O2 + O2. Functionally, destroys radicals which are normally produced within the cells and which are toxic to biological systems. This is Superoxide dismutase [Cu-Zn] 2 (SODCC.2) from Mesembryanthemum crystallinum (Common ice plant).